The following is a 238-amino-acid chain: Large ribosomal subunit protein uL2 (238 aa).

Disordered regions lie at residues 1–34 and 197–238; these read MGKR…PPLS and VDHP…RRKR. A compositionally biased stretch (basic residues) spans 224–238; it reads KVGHIAARRTGRRKR.

It belongs to the universal ribosomal protein uL2 family. As to quaternary structure, part of the 50S ribosomal subunit. Forms a bridge to the 30S subunit in the 70S ribosome.

Its function is as follows. One of the primary rRNA binding proteins. Required for association of the 30S and 50S subunits to form the 70S ribosome, for tRNA binding and peptide bond formation. It has been suggested to have peptidyltransferase activity; this is somewhat controversial. Makes several contacts with the 16S rRNA in the 70S ribosome. In Aeropyrum pernix (strain ATCC 700893 / DSM 11879 / JCM 9820 / NBRC 100138 / K1), this protein is Large ribosomal subunit protein uL2.